The sequence spans 1096 residues: Protein EMBRYONIC FLOWER 1 (1096 aa).

Disordered regions lie at residues 155 to 189 (KARG…EKLN), 274 to 296 (KTSG…VRGR), 315 to 348 (GATS…KGKQ), 366 to 420 (ETSQ…KKPV), 563 to 612 (LSRV…DIPM), 629 to 651 (DKEE…KNAL), 1007 to 1032 (DKEK…KNSS), and 1070 to 1096 (FKKK…TQNA). 2 consecutive short sequence motifs (nuclear localization signal) follow at residues 170 to 177 (SRKLVSPE) and 281 to 288 (IRKEESAL). Residues 281 to 294 (IRKEESALKKESVR) are compositionally biased toward basic and acidic residues. Residues 315-337 (GATSENASKSCDSDQGNSESTDS) are compositionally biased toward polar residues. The tract at residues 337 to 617 (SGFDRTPFKG…DDIPMEIVEL (281 aa)) is DNA-binding. A compositionally biased stretch (basic and acidic residues) spans 371 to 381 (GIKEHDADPSK). Polar residues predominate over residues 382 to 394 (RSTPAHSLFTGND). The segment covering 572 to 601 (SGADRKGKTVMVQEHHGAPRSQSHDRKETT) has biased composition (basic and acidic residues). The DNA-binding stretch occupies residues 866–1096 (LDPRLRSTTP…KPVCPPTQNA (231 aa)). The segment covering 1018–1032 (SCNNNASAGPVKNSS) has biased composition (polar residues). The Nuclear localization signal 3 signature appears at 1071-1078 (KKKPAVCK).

In terms of assembly, interacts with MSI1. As to expression, expressed in mature embryo, root tips, cotyledons, leaves, stems, shoot apex, and flower clusters, with highest levels in flowers. The presence in the shoot apical meristem (SAM) is required to maintain vegetative development and prevent early flowering.

The protein resides in the nucleus. Its function is as follows. Transcription repressor that regulates phase transition during shoot, flower and seeds development. Controls leaves development, shoot architecture and flowering by delaying both the vegetative to reproductive transition and flower initiation. Participates in polycomb group (PcG) protein complex-mediated (including EMF2) silencing of the flower homeotic genes AGAMOUS (AG), PISTILLATA (PI), and APETALA3 (AP3), as well as of some regulatory genes such as ABSCISIC ACID INSENSITIVE3 (ABI3), LONG VEGETATIVE PHASE1 (LOV1), and FLOWERING LOCUS C (FLC) during vegetative development. Required for histone methylation or for maintaining a stable histone methylation (e.g. H3K27me3) pattern of repressed target genes (including genes involved in salt stress response and flower development); this repression is counteracted by ULT1. Can bind non specifically DNA (both double- and single-stranded) and RNA. This Arabidopsis thaliana (Mouse-ear cress) protein is Protein EMBRYONIC FLOWER 1.